Here is a 573-residue protein sequence, read N- to C-terminus: DNA polymerase lambda (573 aa).

The BRCT domain maps to 35-131; that stretch reads EARGWLSSLR…RLTDTEGFSL (97 aa). Disordered stretches follow at residues 126–204 and 214–233; these read TEGF…GPQV and TGHYPTPPEEDGGPDPAPEA. The tract at residues 263-277 is DNA-binding; that stretch reads KAYSVQGDKWRALGY. Lysine 310 serves as the catalytic Schiff-base intermediate with DNA. The tract at residues 343 to 346 is DNA-binding; sequence GTKT. DCTP contacts are provided by residues arginine 384, 415 to 418, and 424 to 427; these read SYRR and GDVD. The interval 418–427 is involved in primer binding; it reads RGKMTCGDVD. The Mn(2+) site is built by aspartate 425, aspartate 427, and aspartate 488. The interval 464 to 503 is DNA-binding; sequence ENGQQQKYLGVCRLPGPGKRHRRLDIIVVPYCEFACALLY. DCTP is bound at residue asparagine 511.

The protein belongs to the DNA polymerase type-X family. Interacts with PCNA. Interacts with PAXX; promoting POLL recruitment to double-strand breaks (DSBs) and stimulation of the end-filling activity of POLL. Interacts with XRCC4; promoting POLL recruitment to double-strand breaks (DSBs) and stimulation of the end-filling activity of POLL. Interacts with NHEJ1/XLF; promoting POLL recruitment to double-strand breaks (DSBs) and stimulation of the end-filling activity of POLL. Requires Mn(2+) as cofactor.

Its subcellular location is the nucleus. The enzyme catalyses DNA(n) + a 2'-deoxyribonucleoside 5'-triphosphate = DNA(n+1) + diphosphate. In terms of biological role, DNA polymerase that functions in several pathways of DNA repair. Involved in base excision repair (BER) responsible for repair of lesions that give rise to abasic (AP) sites in DNA. Also contributes to DNA double-strand break repair by non-homologous end joining and homologous recombination. Has both template-dependent and template-independent (terminal transferase) DNA polymerase activities. Also has a 5'-deoxyribose-5-phosphate lyase (dRP lyase) activity. The polypeptide is DNA polymerase lambda (Mus musculus (Mouse)).